Here is a 483-residue protein sequence, read N- to C-terminus: Regulatory protein ViaA (483 aa).

The protein belongs to the ViaA family. In terms of assembly, homodimer. Interacts with RavA.

The protein localises to the cytoplasm. Its function is as follows. Component of the RavA-ViaA chaperone complex, which may act on the membrane to optimize the function of some of the respiratory chains. ViaA stimulates the ATPase activity of RavA. The protein is Regulatory protein ViaA of Enterobacter sp. (strain 638).